Consider the following 378-residue polypeptide: Carbamoyl phosphate synthase small chain (378 aa).

The segment at 1–188 (MLPSFPPAIL…LGRGYGVQDK (188 aa)) is CPSase. The L-glutamine site is built by Ser50, Gly240, and Gly242. Positions 192-378 (HVVAYDFGVK…FTAAMAERKQ (187 aa)) constitute a Glutamine amidotransferase type-1 domain. The Nucleophile role is filled by Cys268. 5 residues coordinate L-glutamine: Leu269, Gln272, Asn310, Gly312, and Phe313. Catalysis depends on residues His352 and Glu354.

It belongs to the CarA family. As to quaternary structure, composed of two chains; the small (or glutamine) chain promotes the hydrolysis of glutamine to ammonia, which is used by the large (or ammonia) chain to synthesize carbamoyl phosphate. Tetramer of heterodimers (alpha,beta)4.

It catalyses the reaction hydrogencarbonate + L-glutamine + 2 ATP + H2O = carbamoyl phosphate + L-glutamate + 2 ADP + phosphate + 2 H(+). It carries out the reaction L-glutamine + H2O = L-glutamate + NH4(+). Its pathway is amino-acid biosynthesis; L-arginine biosynthesis; carbamoyl phosphate from bicarbonate: step 1/1. It participates in pyrimidine metabolism; UMP biosynthesis via de novo pathway; (S)-dihydroorotate from bicarbonate: step 1/3. Small subunit of the glutamine-dependent carbamoyl phosphate synthetase (CPSase). CPSase catalyzes the formation of carbamoyl phosphate from the ammonia moiety of glutamine, carbonate, and phosphate donated by ATP, constituting the first step of 2 biosynthetic pathways, one leading to arginine and/or urea and the other to pyrimidine nucleotides. The small subunit (glutamine amidotransferase) binds and cleaves glutamine to supply the large subunit with the substrate ammonia. The chain is Carbamoyl phosphate synthase small chain from Ralstonia nicotianae (strain ATCC BAA-1114 / GMI1000) (Ralstonia solanacearum).